Here is a 250-residue protein sequence, read N- to C-terminus: UPF0736 protein BLi01230/BL03322 (250 aa).

This sequence belongs to the UPF0736 family.

The polypeptide is UPF0736 protein BLi01230/BL03322 (Bacillus licheniformis (strain ATCC 14580 / DSM 13 / JCM 2505 / CCUG 7422 / NBRC 12200 / NCIMB 9375 / NCTC 10341 / NRRL NRS-1264 / Gibson 46)).